The following is a 235-amino-acid chain: Large ribosomal subunit protein uL1 (235 aa).

It belongs to the universal ribosomal protein uL1 family. In terms of assembly, part of the 50S ribosomal subunit.

Its function is as follows. Binds directly to 23S rRNA. The L1 stalk is quite mobile in the ribosome, and is involved in E site tRNA release. Functionally, protein L1 is also a translational repressor protein, it controls the translation of the L11 operon by binding to its mRNA. The protein is Large ribosomal subunit protein uL1 of Desulfovibrio desulfuricans (strain ATCC 27774 / DSM 6949 / MB).